A 428-amino-acid chain; its full sequence is Elongation factor 1-alpha (428 aa).

One can recognise a tr-type G domain in the interval Lys-5–Thr-225. Residues Gly-14–Ser-21 are G1. Residue Gly-14–Ser-21 participates in GTP binding. Ser-21 serves as a coordination point for Mg(2+). Residues Gly-70–Asp-74 are G2. Residues Asp-91 to Gly-94 are G3. Residues Asp-91–His-95 and Asn-149–Asp-152 contribute to the GTP site. The tract at residues Asn-149–Asp-152 is G4. The G5 stretch occupies residues Ala-189–Leu-191.

The protein belongs to the TRAFAC class translation factor GTPase superfamily. Classic translation factor GTPase family. EF-Tu/EF-1A subfamily.

Its subcellular location is the cytoplasm. The enzyme catalyses GTP + H2O = GDP + phosphate + H(+). GTP hydrolase that promotes the GTP-dependent binding of aminoacyl-tRNA to the A-site of ribosomes during protein biosynthesis. The protein is Elongation factor 1-alpha of Methanocaldococcus jannaschii (strain ATCC 43067 / DSM 2661 / JAL-1 / JCM 10045 / NBRC 100440) (Methanococcus jannaschii).